The sequence spans 448 residues: Protein king tubby (448 aa).

The tract at residues 103–195 (HELEDEESSP…NGTGGESEGD (93 aa)) is disordered. A compositionally biased stretch (low complexity) spans 118–133 (QHQQSASHSANSTQSQ). Serine 141 is subject to Phosphoserine. The span at 182-191 (NGTGNGTGGE) shows a compositional bias: gly residues.

Belongs to the TUB family.

Its subcellular location is the cytoplasm. It localises to the nucleus. The protein localises to the cell projection. It is found in the cilium membrane. The protein resides in the rhabdomere. The sequence is that of Protein king tubby from Drosophila erecta (Fruit fly).